A 236-amino-acid chain; its full sequence is Small ribosomal subunit protein uS2c (236 aa).

The protein belongs to the universal ribosomal protein uS2 family.

It is found in the plastid. The protein localises to the chloroplast. In Populus alba (White poplar), this protein is Small ribosomal subunit protein uS2c (rps2).